Consider the following 448-residue polypeptide: Probable glycine dehydrogenase (decarboxylating) subunit 1 (448 aa).

This sequence belongs to the GcvP family. N-terminal subunit subfamily. As to quaternary structure, the glycine cleavage system is composed of four proteins: P, T, L and H. In this organism, the P 'protein' is a heterodimer of two subunits.

It catalyses the reaction N(6)-[(R)-lipoyl]-L-lysyl-[glycine-cleavage complex H protein] + glycine + H(+) = N(6)-[(R)-S(8)-aminomethyldihydrolipoyl]-L-lysyl-[glycine-cleavage complex H protein] + CO2. Functionally, the glycine cleavage system catalyzes the degradation of glycine. The P protein binds the alpha-amino group of glycine through its pyridoxal phosphate cofactor; CO(2) is released and the remaining methylamine moiety is then transferred to the lipoamide cofactor of the H protein. This Geobacillus thermodenitrificans (strain NG80-2) protein is Probable glycine dehydrogenase (decarboxylating) subunit 1.